We begin with the raw amino-acid sequence, 310 residues long: Homoserine kinase (310 aa).

ATP is bound at residue 91-101 (PIGSGLGSSAC).

It belongs to the GHMP kinase family. Homoserine kinase subfamily.

The protein resides in the cytoplasm. It catalyses the reaction L-homoserine + ATP = O-phospho-L-homoserine + ADP + H(+). Its pathway is amino-acid biosynthesis; L-threonine biosynthesis; L-threonine from L-aspartate: step 4/5. Catalyzes the ATP-dependent phosphorylation of L-homoserine to L-homoserine phosphate. This chain is Homoserine kinase, found in Escherichia coli O6:H1 (strain CFT073 / ATCC 700928 / UPEC).